Reading from the N-terminus, the 318-residue chain is Cuticle collagen dpy-7 (318 aa).

Triple-helical region regions lie at residues 101–130 (GPIG…DGLD), 147–206 (GPPG…PGDD), 209–235 (GGTG…NGLP), and 240–278 (GPPG…PGGH). Residues 101-318 (GPIGPPGVSG…GYSGGGYGKK (218 aa)) are disordered. The span at 187-204 (PQGEPGEQGEPGIKGPPG) shows a compositional bias: low complexity. Composition is skewed to pro residues over residues 216–228 (PPGP…PKGP) and 250–268 (PPGP…PFGP). The span at 309-318 (GYSGGGYGKK) shows a compositional bias: gly residues.

This sequence belongs to the cuticular collagen family. Collagen polypeptide chains are complexed within the cuticle by disulfide bonds and other types of covalent cross-links.

In terms of biological role, nematode cuticles are composed largely of collagen-like proteins. The cuticle functions both as an exoskeleton and as a barrier to protect the worm from its environment. Mutations in dpy-7 affects the body shape. The protein is Cuticle collagen dpy-7 (dpy-7) of Caenorhabditis elegans.